Consider the following 704-residue polypeptide: Capsule polysaccharide modification protein LipA (704 aa).

The protein localises to the cell inner membrane. Involved in the phospholipid modification of the capsular polysaccharide, a strong requirement for its translocation to the cell surface. In Neisseria meningitidis serogroup B (strain ATCC BAA-335 / MC58), this protein is Capsule polysaccharide modification protein LipA (lipA).